The chain runs to 120 residues: UPF0102 protein Daro_0503 (120 aa).

The interval Met-1 to Ala-20 is disordered.

The protein belongs to the UPF0102 family.

This Dechloromonas aromatica (strain RCB) protein is UPF0102 protein Daro_0503.